The chain runs to 285 residues: Ret finger protein-like 4A (285 aa).

The segment at 11-53 (CYFCFRYLENPVYLNCGYICCFQCLDSLEKSPEGDGVLCPNCS) adopts an RING-type; degenerate zinc-finger fold. One can recognise a B30.2/SPRY domain in the interval 78-276 (EPQLNFILTM…ISICPVMNPS (199 aa)).

Interacts with PSMB1, UBE2A and CCNB1.

It is found in the cytoplasm. It localises to the nucleus. This chain is Ret finger protein-like 4A (Rfpl4a), found in Rattus norvegicus (Rat).